We begin with the raw amino-acid sequence, 128 residues long: Sulfurtransferase TusD (128 aa).

Cys78 serves as the catalytic Cysteine persulfide intermediate.

It belongs to the DsrE/TusD family. In terms of assembly, heterohexamer, formed by a dimer of trimers. The hexameric TusBCD complex contains 2 copies each of TusB, TusC and TusD. The TusBCD complex interacts with TusE.

Its subcellular location is the cytoplasm. Its function is as follows. Part of a sulfur-relay system required for 2-thiolation of 5-methylaminomethyl-2-thiouridine (mnm(5)s(2)U) at tRNA wobble positions. Accepts sulfur from TusA and transfers it in turn to TusE. This Escherichia coli (strain 55989 / EAEC) protein is Sulfurtransferase TusD.